The following is a 138-amino-acid chain: Acidic phospholipase A2 Ts-A6 (138 aa).

The N-terminal stretch at 1–16 (MRALWIMAVLLLGVEG) is a signal peptide. 7 cysteine pairs are disulfide-bonded: cysteine 42–cysteine 131, cysteine 44–cysteine 60, cysteine 59–cysteine 111, cysteine 65–cysteine 138, cysteine 66–cysteine 104, cysteine 73–cysteine 97, and cysteine 91–cysteine 102. The Ca(2+) site is built by tyrosine 43, glycine 45, and glycine 47. Histidine 63 is a catalytic residue. Residue aspartate 64 participates in Ca(2+) binding. The active site involves aspartate 105.

Ca(2+) serves as cofactor. Expressed by the venom gland.

The protein localises to the secreted. The enzyme catalyses a 1,2-diacyl-sn-glycero-3-phosphocholine + H2O = a 1-acyl-sn-glycero-3-phosphocholine + a fatty acid + H(+). In terms of biological role, snake venom phospholipase A2 (PLA2) that shows a moderate inhibition of ADP-induced human platelet aggregation when tested on platelet rich plasma. Exhibits high hydrolytic activities and prefers the anionic micelles (dPPC with deoxycholate) to the zwitterionic micelles (dPPC with Triton X-100). PLA2 catalyzes the calcium-dependent hydrolysis of the 2-acyl groups in 3-sn-phosphoglycerides. The chain is Acidic phospholipase A2 Ts-A6 from Trimeresurus stejnegeri (Chinese green tree viper).